The chain runs to 2266 residues: Protein ELYS (2266 aa).

The tract at residues 1 to 494 (MRDLRAQVTS…SGVVHLTCTG (494 aa)) is seven-bladed beta propeller repeats. The necessary for cytoplasmic localization stretch occupies residues 1–981 (MRDLRAQVTS…QTLKINVMND (981 aa)). 9 positions are modified to phosphoserine: Ser509, Ser528, Ser1080, Ser1138, Ser1142, Ser1150, Ser1153, Ser1155, and Ser1160. An important for nuclear localization region spans residues 591–1092 (VVLTKEEFDR…IEEPSPIVYS (502 aa)). The disordered stretch occupies residues 1019–2266 (YHLSTSSVFR…PKQILRRKML (1248 aa)). The segment at 1149 to 2266 (RSLPSSSQLK…PKQILRRKML (1118 aa)) is necessary for nuclear localization. A Phosphothreonine modification is found at Thr1175. Ser1214, Ser1218, Ser1222, Ser1232, and Ser1250 each carry phosphoserine. Position 1257 is a phosphothreonine (Thr1257). 2 positions are modified to phosphoserine: Ser1283 and Ser1297. Polar residues-rich tracts occupy residues 1305–1320 (KGNS…TTLE) and 1335–1353 (FTAS…NVTE). At Thr1369 the chain carries Phosphothreonine. Residues Ser1371 and Ser1513 each carry the phosphoserine modification. A mediates transcriptional activity region spans residues 1446 to 1698 (RANDNKSMAD…MEQSIHETIP (253 aa)). Position 1517 is a phosphothreonine (Thr1517). Phosphoserine occurs at positions 1533, 1541, 1729, and 1806. 2 stretches are compositionally biased toward polar residues: residues 1796 to 1808 (LSQN…NSVT) and 1822 to 1838 (ILEN…ITTG). Thr1808 carries the phosphothreonine modification. Positions 1842 to 2266 (KRLKSSQLLE…PKQILRRKML (425 aa)) are important for nuclear localization and chromatin binding. 3 positions are modified to phosphoserine: Ser1878, Ser1884, and Ser1898. The segment covering 1908 to 1919 (STNLDASENTGN) has biased composition (polar residues). Basic and acidic residues-rich tracts occupy residues 1920–1930 (KQDDKSSDKQL) and 1940–1952 (GREV…REDS). Phosphoserine is present on residues Ser1944 and Ser1946. The a.T hook DNA-binding region spans 1971–1983 (PRKRGRPRKINPS). A compositionally biased stretch (basic and acidic residues) spans 1986-2004 (VGSKAVKEERSPKKKEAPS). A phosphoserine mark is found at Ser1996, Ser2043, Ser2044, and Ser2060. A compositionally biased stretch (basic and acidic residues) spans 2064–2084 (VSEERTDEMTHKETNEQEERL). A phosphoserine mark is found at Ser2089, Ser2120, Ser2123, and Ser2154. The span at 2169 to 2179 (NKLEDELKDDA) shows a compositional bias: basic and acidic residues. Residues 2188 to 2197 (PKAKRIRTSK) are compositionally biased toward basic residues. 3 positions are modified to phosphoserine: Ser2212, Ser2222, and Ser2226.

This sequence belongs to the ELYS family. Associates with the Nup107-160 subcomplex of the NPC.

It is found in the cytoplasm. The protein resides in the nucleus. The protein localises to the nucleus envelope. Its subcellular location is the nucleus matrix. It localises to the chromosome. It is found in the centromere. The protein resides in the kinetochore. The protein localises to the nucleoplasm. Its subcellular location is the nuclear pore complex. Its function is as follows. Required for the assembly of a functional nuclear pore complex (NPC) on the surface of chromosomes as nuclei form at the end of mitosis. May initiate NPC assembly by binding to chromatin and recruiting the Nup107-160 subcomplex of the NPC. Also required for the localization of the Nup107-160 subcomplex of the NPC to the kinetochore during mitosis and for the completion of cytokinesis. This chain is Protein ELYS (AHCTF1), found in Homo sapiens (Human).